Here is a 112-residue protein sequence, read N- to C-terminus: Small ribosomal subunit protein bS6 (112 aa).

This sequence belongs to the bacterial ribosomal protein bS6 family.

Functionally, binds together with bS18 to 16S ribosomal RNA. The sequence is that of Small ribosomal subunit protein bS6 from Hyphomonas neptunium (strain ATCC 15444).